The following is a 116-amino-acid chain: Large ribosomal subunit protein uL18 (116 aa).

This sequence belongs to the universal ribosomal protein uL18 family. As to quaternary structure, part of the 50S ribosomal subunit; part of the 5S rRNA/L5/L18/L25 subcomplex. Contacts the 5S and 23S rRNAs.

This is one of the proteins that bind and probably mediate the attachment of the 5S RNA into the large ribosomal subunit, where it forms part of the central protuberance. This Pseudomonas aeruginosa (strain UCBPP-PA14) protein is Large ribosomal subunit protein uL18.